Reading from the N-terminus, the 354-residue chain is Uroporphyrinogen decarboxylase (354 aa).

Residues 27–31 (RQAGR), aspartate 77, tyrosine 154, serine 209, and histidine 327 each bind substrate.

Belongs to the uroporphyrinogen decarboxylase family. Homodimer.

Its subcellular location is the cytoplasm. It catalyses the reaction uroporphyrinogen III + 4 H(+) = coproporphyrinogen III + 4 CO2. It participates in porphyrin-containing compound metabolism; protoporphyrin-IX biosynthesis; coproporphyrinogen-III from 5-aminolevulinate: step 4/4. Its function is as follows. Catalyzes the decarboxylation of four acetate groups of uroporphyrinogen-III to yield coproporphyrinogen-III. The sequence is that of Uroporphyrinogen decarboxylase from Methylobacillus flagellatus (strain ATCC 51484 / DSM 6875 / VKM B-1610 / KT).